Here is a 244-residue protein sequence, read N- to C-terminus: Glutathione S-transferase theta-2 (244 aa).

In terms of domain architecture, GST N-terminal spans 2–82; that stretch reads GLELYLDLLS…YLSSKYQVAD (81 aa). Residues 40–41, 53–54, 66–67, and 104–107 contribute to the glutathione site; these read HM, KV, ES, and DNIR. The 143-residue stretch at 88-230 folds into the GST C-terminal domain; the sequence is DLQARAQVHE…AKKMLPVPPP (143 aa).

The protein belongs to the GST superfamily. Theta family. Homodimer. In terms of tissue distribution, in liver, highest expression found in central vein limiting plate hepatocytes. Also expressed in interlobular bile duct epithelial cells. In lung, expressed in club cells and ciliated cells of the bronchiolar epithelium and in type II alveolar cells of the lung parenchyma.

It is found in the cytoplasm. The protein localises to the cytosol. The protein resides in the nucleus. The catalysed reaction is RX + glutathione = an S-substituted glutathione + a halide anion + H(+). Its function is as follows. Conjugation of reduced glutathione to a wide number of exogenous and endogenous hydrophobic electrophiles. The polypeptide is Glutathione S-transferase theta-2 (Mus musculus (Mouse)).